The primary structure comprises 319 residues: Beta-sarcoglycan (319 aa).

The span at 1–10 shows a compositional bias: low complexity; that stretch reads MAAAAAAAAA. The segment at 1-33 is disordered; it reads MAAAAAAAAAEQQSSNGPVKKSMREKAVERRNV. The Cytoplasmic segment spans residues 1–66; it reads MAAAAAAAAA…GLRGRKGNLA (66 aa). A compositionally biased stretch (basic and acidic residues) spans 22-33; it reads SMREKAVERRNV. Residues 67 to 87 form a helical; Signal-anchor for type II membrane protein membrane-spanning segment; sequence ICVIILLFILAVINLIITLVI. The Extracellular segment spans residues 88 to 318; sequence WAVIRIGPNG…QISDNPCGNT (231 aa). Residues asparagine 159, asparagine 212, and asparagine 259 are each glycosylated (N-linked (GlcNAc...) asparagine). 2 cysteine pairs are disulfide-bonded: cysteine 289/cysteine 315 and cysteine 291/cysteine 308.

This sequence belongs to the sarcoglycan beta/delta/gamma/zeta family. In terms of assembly, cross-link to form 2 major subcomplexes: one consisting of SGCB, SGCD and SGCG and the other consisting of SGCB and SGCD. The association between SGCB and SGCG is particularly strong while SGCA is loosely associated with the other sarcoglycans. Post-translationally, disulfide bonds are present.

The protein resides in the cell membrane. It localises to the sarcolemma. The protein localises to the cytoplasm. It is found in the cytoskeleton. Component of the sarcoglycan complex, a subcomplex of the dystrophin-glycoprotein complex which forms a link between the F-actin cytoskeleton and the extracellular matrix. The sequence is that of Beta-sarcoglycan (SGCB) from Pongo abelii (Sumatran orangutan).